The following is a 275-amino-acid chain: tRNA uridine(34) hydroxylase (275 aa).

Residues Ser122 to Ser218 form the Rhodanese domain. Catalysis depends on Cys178, which acts as the Cysteine persulfide intermediate.

This sequence belongs to the TrhO family.

The enzyme catalyses uridine(34) in tRNA + AH2 + O2 = 5-hydroxyuridine(34) in tRNA + A + H2O. In terms of biological role, catalyzes oxygen-dependent 5-hydroxyuridine (ho5U) modification at position 34 in tRNAs. In Ehrlichia chaffeensis (strain ATCC CRL-10679 / Arkansas), this protein is tRNA uridine(34) hydroxylase.